We begin with the raw amino-acid sequence, 274 residues long: Large ribosomal subunit protein uL2 (274 aa).

Residues 223–274 form a disordered region; it reads VVMNPVDHPHGGGEGRTSGGRHPVSPWGVPTKGYKTRSNKRTDKYIVRRRNK.

Belongs to the universal ribosomal protein uL2 family. In terms of assembly, part of the 50S ribosomal subunit. Forms a bridge to the 30S subunit in the 70S ribosome.

One of the primary rRNA binding proteins. Required for association of the 30S and 50S subunits to form the 70S ribosome, for tRNA binding and peptide bond formation. It has been suggested to have peptidyltransferase activity; this is somewhat controversial. Makes several contacts with the 16S rRNA in the 70S ribosome. The polypeptide is Large ribosomal subunit protein uL2 (Vibrio cholerae serotype O1 (strain M66-2)).